Reading from the N-terminus, the 222-residue chain is Cytidylate kinase (222 aa).

10 to 18 serves as a coordination point for ATP; sequence GPSASGKGT.

Belongs to the cytidylate kinase family. Type 1 subfamily.

Its subcellular location is the cytoplasm. The enzyme catalyses CMP + ATP = CDP + ADP. It catalyses the reaction dCMP + ATP = dCDP + ADP. In Chromobacterium violaceum (strain ATCC 12472 / DSM 30191 / JCM 1249 / CCUG 213 / NBRC 12614 / NCIMB 9131 / NCTC 9757 / MK), this protein is Cytidylate kinase.